Reading from the N-terminus, the 249-residue chain is Low affinity immunoglobulin gamma Fc region receptor III-A (249 aa).

A signal peptide spans 1-16; the sequence is MWQLLPSTALLLVASA. At 17-198 the chain is on the extracellular side; it reads RPQAADLPKA…IQGPPVPSTS (182 aa). 2 Ig-like C2-type domains span residues 24 to 104 and 119 to 172; these read PKAV…LEVH and EGEP…YFCR. Cystine bridges form between Cys47–Cys88 and Cys127–Cys171. N-linked (GlcNAc...) asparagine glycans are attached at residues Asn55, Asn63, Asn166, and Asn179. Residues 199–219 traverse the membrane as a helical segment; sequence ALLPFWPHIPFAVVMALLFAV. The Cytoplasmic portion of the chain corresponds to 220–249; that stretch reads DTGLYFAMQRHLHNSKRAWENSKVSWKQDP.

In terms of assembly, forms a heterooligomeric complex with ITAM-containing signaling subunits FCER1G. Interacts (via transmembrane domain) with signaling subunits; this interaction is a prerequisite for receptor complex expression on the cell surface and intracellular signal transduction. Binds the Fc region of antigen-complexed IgG.

It localises to the cell membrane. Its function is as follows. Receptor for the invariable Fc fragment of immunoglobulin gamma (IgG). Optimally activated upon binding of clustered antigen-IgG complexes displayed on cell surfaces, triggers lysis of antibody-coated cells, a process known as antibody-dependent cellular cytotoxicity (ADCC). Does not bind free monomeric IgG, thus avoiding inappropriate effector cell activation in the absence of antigenic trigger. Mediates IgG effector functions on natural killer (NK) cells. Binds antigen-IgG complexes generated upon infection and triggers NK cell-dependent cytokine production and degranulation to limit viral load and propagation. Fc-binding subunit that associates with FCER1G adapter to form functional signaling complexes. Following the engagement of antigen-IgG complexes, triggers phosphorylation of immunoreceptor tyrosine-based activation motif (ITAM)-containing adapter with subsequent activation of phosphatidylinositol 3-kinase signaling and sustained elevation of intracellular calcium that ultimately drive NK cell activation. Mediates enhanced ADCC in response to afucosylated IgGs. This is Low affinity immunoglobulin gamma Fc region receptor III-A from Mustela putorius furo (European domestic ferret).